Reading from the N-terminus, the 207-residue chain is Urease accessory protein UreG (207 aa).

Residue 14-21 (GPVGSGKT) participates in GTP binding.

This sequence belongs to the SIMIBI class G3E GTPase family. UreG subfamily. As to quaternary structure, homodimer. UreD, UreF and UreG form a complex that acts as a GTP-hydrolysis-dependent molecular chaperone, activating the urease apoprotein by helping to assemble the nickel containing metallocenter of UreC. The UreE protein probably delivers the nickel.

Its subcellular location is the cytoplasm. Facilitates the functional incorporation of the urease nickel metallocenter. This process requires GTP hydrolysis, probably effectuated by UreG. The sequence is that of Urease accessory protein UreG from Pseudomonas putida (strain GB-1).